The chain runs to 459 residues: MSFTLAIIGRPNVGKSTLFNRLVGQKLALVDDAPGVTRDRREGEGRLGDLNFTLIDTAGLDEGPKGSLTARMQEQTETAIELADALLFVFDARAGLTPNDRAFADFARRANKPVVLVANKSEGKSGEIGAMESYALGLGDPVQISAEHGEGMGELYDALRPLLPEPVEDEEDDEPADQSEEAIATRPIRVAIVGRPNAGKSTFINRLLGEERLLTSPEAGTTRDSIAVEVEWKGRDFRVFDTAGLRRRSRIEEKLEKLSVADALRAVRFAEVVVLMMDAQNRFEEQDLRIADLVEREGRALVIAVNKWDLIERQGGQIAQLRTDADHWLPQIKGVPIVATSGMLGEGVDRLMQAIQDAYAVWNRRVPTAALNRWFEQAISQNPPPAVSGRRLKLNYVTQTKARPPSFVVFCSRADAVPESYLRYLVNSLRGAFDLPGTPVRITLREKANPFAHKRKRKS.

EngA-type G domains are found at residues 3–167 and 188–363; these read FTLA…PEPV and IRVA…AVWN. Residues 9–16, 56–60, 119–122, 194–201, 241–245, and 306–309 each bind GTP; these read GRPNVGKS, DTAGL, NKSE, GRPNAGKS, and NKWD. The KH-like domain occupies 364–448; that stretch reads RRVPTAALNR…PVRITLREKA (85 aa).

This sequence belongs to the TRAFAC class TrmE-Era-EngA-EngB-Septin-like GTPase superfamily. EngA (Der) GTPase family. As to quaternary structure, associates with the 50S ribosomal subunit.

Its function is as follows. GTPase that plays an essential role in the late steps of ribosome biogenesis. The chain is GTPase Der from Rhodopseudomonas palustris (strain TIE-1).